A 184-amino-acid polypeptide reads, in one-letter code: Chromophore lyase CpcS/CpeS 1 (184 aa).

Belongs to the CpcS/CpeS biliprotein lyase family.

Functionally, covalently attaches a chromophore to Cys residue(s) of phycobiliproteins. This is Chromophore lyase CpcS/CpeS 1 from Synechococcus sp. (strain JA-3-3Ab) (Cyanobacteria bacterium Yellowstone A-Prime).